A 49-amino-acid polypeptide reads, in one-letter code: Large ribosomal subunit protein bL33D (49 aa).

This sequence belongs to the bacterial ribosomal protein bL33 family.

The protein is Large ribosomal subunit protein bL33D (rpmG4) of Enterococcus faecalis (strain ATCC 700802 / V583).